The primary structure comprises 211 residues: Mediator-associated protein 2 (211 aa).

The segment at 128-211 (QQKLVGSVTN…KSKKKVKKEE (84 aa)) is disordered. Residues 134–148 (SVTNSSKKSSNLTQS) show a composition bias toward low complexity. The residue at position 173 (serine 173) is a Phosphoserine. Low complexity predominate over residues 189-198 (STSTVSGSSE). Residues 202 to 211 (KSKKKVKKEE) are compositionally biased toward basic residues.

As to quaternary structure, associated with the Mediator complex.

Its subcellular location is the nucleus. This is Mediator-associated protein 2 from Arabidopsis thaliana (Mouse-ear cress).